The chain runs to 1202 residues: MGAMAYSLLLCLLLAHLGLGEVGASLDPSERPDSSRERTSRGKQHGQQLPRASAPDPSIPWSRSTDGTILAQKLAEEVPMDVASYLYTGDFHQLKRANCSGRYELAGLPGKSPSLASSHPSLHGALDTLTHATNFLNMMLQSNKSREQTVQDDLQWYQALVRSLLEGEPSISRAAITFSTESLSTPAPQVFLQATREESRILLQDLSSSAHHLANATLETEWFHGLRRKWRPHLHRRGSNQGPRGLGHSWRRRDGLGGDRSHVKWSPPFLECENGSYKPGWLVTLSAAFYGLQPNLVPEFRGVMKVDINLQKVDIDQCSSDGWFSGTHKCHLNNSECMPIKGLGFVLGAYQCVCKAGFYHPRVFSVNNFQRRGPDHHFSGSTKDVSEEAHVCLPCREGCPFCADDRPCFVQEDKYLRLAIISFQALCMLLDFVSMLVVYHFRKAKSIRASGLILLETILFGSLLLYFPVVILYFEPSTFRCILLRWVRLLGFATVYGTVTLKLHRVLKVFLSRTAQRIPYMTGGRVMRMLAVIVLVVFWFLVGWTSSMCQNLERDILLVGQGQTSDNLTFNMCLIDRWDYMTAVAEFLFLLWGIYLCYAVRTVPSAFHEPRYMAVAVHNELIITAIFHTIRFVLASRLQPDWMLMLYFAHTHLTVTVTIGLLLIPKFSHSSNNPRDDIATEAYEDELDMGRSGSYLNSSINSAWSEHSLDPEDIRDELKKLYAQLEIYKRKKMITNNPHLQKKRCSKKGLGRSIMRRITEIPETVSRQCSKEDKEGTDHSAAKGTGLVRKNPTESSGNTGRPKEESLKNRVFSLKKSHSTYDHVRDQTDESSSLPTESQEEEVTENSTLESLSSKKLTQKVKEDSEAESTESVPLVCKSASAHNLSSEKKPGHPRTSMLQKSLSVIASAKEKTLGLAGKTQTLVMEDRAKSQKPQPKDRETNRKYSNSDNTETNPNSNHTEELRKPQKSGIMKQQRVNLPTANPDASSSTTQIKDNFDIGEVCPWEVYDLTPGPVPSEPKAQKHVSIAASEVEQNPASFSKEKSHHKPKAAEGLYQANHKSIDKTEVCPWESHGQSPLEDENRLISKTPVLPGRAREENGSQLYTTNMCAGQYEELPPKAVASKVENENLNQMGDQEKQTSSSVDIIPGSCISSNNSPQPLTSRAEVCPWEFEPLEQPNAERIVALPASSALSASKIPGPRK.

An N-terminal signal peptide occupies residues 1 to 24 (MGAMAYSLLLCLLLAHLGLGEVGA). The interval 25–62 (SLDPSERPDSSRERTSRGKQHGQQLPRASAPDPSIPWS) is disordered. The Extracellular portion of the chain corresponds to 25 to 417 (SLDPSERPDS…CFVQEDKYLR (393 aa)). A compositionally biased stretch (basic and acidic residues) spans 28–40 (PSERPDSSRERTS). Positions 85-281 (YLYTGDFHQL…CENGSYKPGW (197 aa)) are cache-like region. 2 N-linked (GlcNAc...) asparagine glycosylation sites follow: N98 and N143. A disulfide bond links C99 and C272. Glycine contacts are provided by S172 and R173. N-linked (GlcNAc...) asparagine glycosylation is present at N215. The disordered stretch occupies residues 234–253 (LHRRGSNQGPRGLGHSWRRR). Residue E271 coordinates glycine. N274 is a glycosylation site (N-linked (GlcNAc...) asparagine). D307 is a glycine binding site. Residue N333 is glycosylated (N-linked (GlcNAc...) asparagine). A helical transmembrane segment spans residues 418–439 (LAIISFQALCMLLDFVSMLVVY). Topologically, residues 440–451 (HFRKAKSIRASG) are cytoplasmic. A helical membrane pass occupies residues 452–474 (LILLETILFGSLLLYFPVVILYF). The Extracellular segment spans residues 475–478 (EPST). Residues 479 to 501 (FRCILLRWVRLLGFATVYGTVTL) traverse the membrane as a helical segment. A disulfide bond links C481 and C573. Topologically, residues 502 to 525 (KLHRVLKVFLSRTAQRIPYMTGGR) are cytoplasmic. Residues 526 to 547 (VMRMLAVIVLVVFWFLVGWTSS) traverse the membrane as a helical segment. The Extracellular segment spans residues 548-576 (MCQNLERDILLVGQGQTSDNLTFNMCLID). A helical transmembrane segment spans residues 577 to 597 (RWDYMTAVAEFLFLLWGIYLC). Topologically, residues 598–611 (YAVRTVPSAFHEPR) are cytoplasmic. A helical membrane pass occupies residues 612–633 (YMAVAVHNELIITAIFHTIRFV). The Extracellular segment spans residues 634-642 (LASRLQPDW). Residues 643–664 (MLMLYFAHTHLTVTVTIGLLLI) traverse the membrane as a helical segment. Residues 665–1202 (PKFSHSSNNP…SASKIPGPRK (538 aa)) are Cytoplasmic-facing. Phosphoserine is present on residues S694, S705, and S708. 2 disordered regions span residues 757-899 (RITE…TSML) and 914-995 (LGLA…QIKD). Basic and acidic residues-rich tracts occupy residues 769–781 (CSKEDKEGTDHSA) and 819–828 (STYDHVRDQT). K774 participates in a covalent cross-link: Glycyl lysine isopeptide (Lys-Gly) (interchain with G-Cter in ubiquitin). A compositionally biased stretch (low complexity) spans 845–856 (ENSTLESLSSKK). S865 carries the phosphoserine modification. Basic and acidic residues predominate over residues 925-943 (MEDRAKSQKPQPKDRETNR). 2 stretches are compositionally biased toward polar residues: residues 944–958 (KYSNSDNTETNPNSN) and 975–994 (QRVNLPTANPDASSSTTQIK). S946 carries the phosphoserine modification. Residues 1002–1006 (VCPWE) carry the VCPWE motif 1 motif. Residue S1061 is modified to Phosphoserine. Residues 1067-1071 (VCPWE) carry the VCPWE motif 2 motif. S1076 carries the post-translational modification Phosphoserine. Composition is skewed to polar residues over residues 1132–1144 (QMGDQEKQTSSSV) and 1151–1162 (CISSNNSPQPLT). Positions 1132-1162 (QMGDQEKQTSSSVDIIPGSCISSNNSPQPLT) are disordered. Positions 1167–1171 (VCPWE) match the VCPWE motif 3 motif.

Belongs to the G-protein coupled receptor 3 family. Homodimer. Associates with the RGS7-GNB5 complex, promoting its localization to the cell membrane and regulating its GTPase activator activity. Interacts (via VCPWE motifs) with GNAO1. Interacts with GPC4. Interacts with EGFLAM.

The protein resides in the cell membrane. It is found in the postsynaptic cell membrane. The protein localises to the presynaptic cell membrane. Its subcellular location is the nucleus. Metabotropic receptor for glycine that controls synapse formation and function in the brain. Acts as an atypical G-protein coupled receptor that recruits and regulates the RGS7-GNB5 complex instead of activating G proteins. In absence of glycine ligand, promotes the GTPase activator activity of RGS7, increasing the GTPase activity of G protein alpha subunits, thereby driving them into their inactive GDP-bound form. Glycine-binding changes the conformation of the intracellular surface, inhibiting the GTPase activator activity of the RGS7-GNB5 complex, promoting G protein alpha subunits into their active GTP-bound form and regulating cAMP levels. Also able to bind taurine, a compound closely related to glycine, but with a two-fold lower affinity. Glycine receptor-dependent regulation of cAMP controls key ion channels, kinases and neurotrophic factors involved in neuronal excitability and synaptic transmission. Plays a pivotal role in regulating mood and cognition via its ability to regulate neuronal excitability in L2/L3 pyramidal neurons of the prefrontal cortex. Also involved in spatial learning by regulating hippocampal CA1 neuronal excitability. Acts as a synaptic organizer in the hippocampus, required for proper mossy fiber-CA3 neurocircuitry establishment, structure and function: induces presynaptic differentiation in contacting axons via its interaction with GPC4. In addition to glycine, may also act as a receptor for osteocalcin (BGLAP) hormone: osteocalcin-binding initiates a signaling response that prevents neuronal apoptosis in the hippocampus and regulates the synthesis of neurotransmitters. This is Metabotropic glycine receptor from Rattus norvegicus (Rat).